Here is a 110-residue protein sequence, read N- to C-terminus: Phosphoribosyl-ATP pyrophosphatase (110 aa).

The protein belongs to the PRA-PH family.

It localises to the cytoplasm. The catalysed reaction is 1-(5-phospho-beta-D-ribosyl)-ATP + H2O = 1-(5-phospho-beta-D-ribosyl)-5'-AMP + diphosphate + H(+). Its pathway is amino-acid biosynthesis; L-histidine biosynthesis; L-histidine from 5-phospho-alpha-D-ribose 1-diphosphate: step 2/9. This is Phosphoribosyl-ATP pyrophosphatase from Clostridium botulinum (strain ATCC 19397 / Type A).